A 258-amino-acid polypeptide reads, in one-letter code: Ferredoxin--NADP reductase (258 aa).

An FAD-binding FR-type domain is found at 2–102 (SNLYTERVLS…RKPTGTLVHD (101 aa)). Positions 51, 52, 53, 54, 67, 69, 76, 77, and 117 each coordinate FAD. NADP(+) is bound by residues Val-144, Arg-145, Thr-181, Arg-182, Arg-190, Ser-223, Glu-227, Phe-255, and Glu-257. Phe-255, Glu-257, and Lys-258 together coordinate FAD.

Belongs to the ferredoxin--NADP reductase type 1 family. In terms of assembly, monomer. FAD serves as cofactor.

The enzyme catalyses 2 reduced [2Fe-2S]-[ferredoxin] + NADP(+) + H(+) = 2 oxidized [2Fe-2S]-[ferredoxin] + NADPH. Functionally, transports electrons between ferredoxin and NADPH. Provides electrons to heme oxygenase (pigA) allowing anaerobic heme degradation. Provides electrons necessary to reduce and mobilize Fe(3+) in a heterooligomeric bacterioferritin (BFR) complex to Fe(2+). Reduction of Fe(3+) in a pure FtnA BFR does not require Bfd. Reduction of Fe(3+) in a pure BfrB BFR does require Bfd. The chain is Ferredoxin--NADP reductase from Pseudomonas aeruginosa (strain ATCC 15692 / DSM 22644 / CIP 104116 / JCM 14847 / LMG 12228 / 1C / PRS 101 / PAO1).